Consider the following 266-residue polypeptide: MNPEFAMPDVQSTVDTRQMPIQRVGVRAVRHPLTVRTAEGETQATVGTWNLDVHLPADQKGTHMSRFVALLEERGGPLTADAFRTMLATMLEKLEARAGRIEVSFPYFVNKTAPVSGVRSLLDYEVTLTGDVRDGLTRVFAKVLVPVTSLCPCSKKISQYGAHNQRSHVTIDAELAADVPVEDLIRIAEEEASCELWGLLKRPDEKFVTERAYENPKFVEDLVRDVARRLDADERIVAYVLEAENFESIHNHSAYALIERDKRRGA.

This sequence belongs to the GTP cyclohydrolase IV family.

The catalysed reaction is GTP + H2O = 7,8-dihydroneopterin 3'-triphosphate + formate + H(+). It participates in cofactor biosynthesis; 7,8-dihydroneopterin triphosphate biosynthesis; 7,8-dihydroneopterin triphosphate from GTP: step 1/1. Functionally, converts GTP to 7,8-dihydroneopterin triphosphate. In Burkholderia mallei (strain ATCC 23344), this protein is GTP cyclohydrolase FolE2.